Here is a 355-residue protein sequence, read N- to C-terminus: Green-sensitive opsin (355 aa).

Topologically, residues 1 to 36 (MNGTEGINFYVPMSNKTGVVRSPFEYPQYYLAEPWK) are extracellular. N2 and N15 each carry an N-linked (GlcNAc...) asparagine glycan. A helical transmembrane segment spans residues 37-61 (YRLVCCYIFFLISTGLPINLLTLLV). The Cytoplasmic portion of the chain corresponds to 62-73 (TFKHKKLRQPLN). Residues 74–99 (YILVNLAVADLFMACFGFTVTFYTAW) form a helical membrane-spanning segment. Residues 100 to 113 (NGYFVFGPVGCAVE) lie on the Extracellular side of the membrane. A disulfide bridge links C110 with C187. The helical transmembrane segment at 114–133 (GFFATLGGQVALWSLVVLAI) threads the bilayer. Over 134-152 (ERYIVVCKPMGNFRFSATH) the chain is Cytoplasmic. The helical transmembrane segment at 153–176 (AMMGIAFTWVMAFSCAAPPLFGWS) threads the bilayer. Over 177–202 (RYMPEGMQCSCGPDYYTHNPDYHNES) the chain is Extracellular. A helical membrane pass occupies residues 203–230 (YVLYMFVIHFIIPVVVIFFSYGRLICKV). Over 231–252 (REAAAQQQESATTQKAEKEVTR) the chain is Cytoplasmic. The helical transmembrane segment at 253–276 (MVILMVLGFMLAWTPYAVVAFWIF) threads the bilayer. At 277–284 (TNKGADFT) the chain is on the extracellular side. Residues 285-309 (ATLMAVPAFFSKSSSLYNPIIYVLM) form a helical membrane-spanning segment. K296 carries the post-translational modification N6-(retinylidene)lysine. The Cytoplasmic segment spans residues 310–355 (NKQFRNCMITTICCGKNPFGDEDVSSTVSQSKTEVSSVSSSQVSPA).

This sequence belongs to the G-protein coupled receptor 1 family. Opsin subfamily. Phosphorylated on some or all of the serine and threonine residues present in the C-terminal region. In terms of tissue distribution, the color pigments are found in the cone photoreceptor cells.

It is found in the membrane. In terms of biological role, visual pigments are the light-absorbing molecules that mediate vision. They consist of an apoprotein, opsin, covalently linked to cis-retinal. This chain is Green-sensitive opsin (PRA1), found in Gallus gallus (Chicken).